We begin with the raw amino-acid sequence, 146 residues long: Cytochrome c-type biogenesis protein CcmE (146 aa).

Topologically, residues 1 to 8 (MHPKRKKR) are cytoplasmic. Residues 9-29 (LLIVLAGLAVVAVASGLILNA) form a helical; Signal-anchor for type II membrane protein membrane-spanning segment. The Periplasmic segment spans residues 30-146 (FRSNLVFFHT…IQRAGETVVQ (117 aa)). Residues His-124 and Tyr-128 each contribute to the heme site.

Belongs to the CcmE/CycJ family.

The protein resides in the cell inner membrane. In terms of biological role, heme chaperone required for the biogenesis of c-type cytochromes. Transiently binds heme delivered by CcmC and transfers the heme to apo-cytochromes in a process facilitated by CcmF and CcmH. This Laribacter hongkongensis (strain HLHK9) protein is Cytochrome c-type biogenesis protein CcmE.